A 232-amino-acid chain; its full sequence is Probable fimbrial chaperone LpfB (232 aa).

Residues 1–24 (MDRMMKSKFVALALSLFLSQSVLA) form the signal peptide.

The protein belongs to the periplasmic pilus chaperone family.

It is found in the periplasm. In terms of biological role, part of the lpfABCC'DE fimbrial operon. LP fimbriae may participate in the interaction with eukaryotic cells by assisting in microcolony formation. The chain is Probable fimbrial chaperone LpfB (lpfB) from Escherichia coli O157:H7.